A 143-amino-acid polypeptide reads, in one-letter code: Large ribosomal subunit protein uL11 (143 aa).

The protein belongs to the universal ribosomal protein uL11 family. In terms of assembly, part of the ribosomal stalk of the 50S ribosomal subunit. Interacts with L10 and the large rRNA to form the base of the stalk. L10 forms an elongated spine to which L12 dimers bind in a sequential fashion forming a multimeric L10(L12)X complex. One or more lysine residues are methylated.

In terms of biological role, forms part of the ribosomal stalk which helps the ribosome interact with GTP-bound translation factors. The chain is Large ribosomal subunit protein uL11 from Alkalilimnicola ehrlichii (strain ATCC BAA-1101 / DSM 17681 / MLHE-1).